Consider the following 520-residue polypeptide: GMP synthase [glutamine-hydrolyzing] (520 aa).

Residues 12 to 205 (KIIVLDYGSQ…AISICGGRGD (194 aa)) form the Glutamine amidotransferase type-1 domain. Residue Cys89 is the Nucleophile of the active site. Residues His179 and Glu181 contribute to the active site. One can recognise a GMPS ATP-PPase domain in the interval 206-395 (WSMDNFIDMQ…LGMPDEVVWR (190 aa)). Position 233–239 (233–239 (SGGVDSS)) interacts with ATP.

As to quaternary structure, homodimer.

The catalysed reaction is XMP + L-glutamine + ATP + H2O = GMP + L-glutamate + AMP + diphosphate + 2 H(+). Its pathway is purine metabolism; GMP biosynthesis; GMP from XMP (L-Gln route): step 1/1. In terms of biological role, catalyzes the synthesis of GMP from XMP. This Streptococcus equi subsp. equi (strain 4047) protein is GMP synthase [glutamine-hydrolyzing].